The chain runs to 452 residues: Probable multidrug resistance protein NorM (452 aa).

12 helical membrane-spanning segments follow: residues 12–34, 49–71, 91–113, 128–150, 162–184, 194–216, 245–267, 282–304, 317–339, 359–381, 388–410, and 415–437; these read RQFL…ITVL, GVAI…LTAV, VIQS…YFLI, VIAK…YNVM, VTML…FIFG, AGAG…YIVH, GIPI…LLMS, NFAS…VVGF, YSYL…ILLF, DFLL…QGAL, NYTL…FVIG, and FGAF…GLFF.

Belongs to the multi antimicrobial extrusion (MATE) (TC 2.A.66.1) family.

The protein localises to the cell membrane. Multidrug efflux pump. The chain is Probable multidrug resistance protein NorM (norM) from Bacillus licheniformis (strain ATCC 14580 / DSM 13 / JCM 2505 / CCUG 7422 / NBRC 12200 / NCIMB 9375 / NCTC 10341 / NRRL NRS-1264 / Gibson 46).